The chain runs to 126 residues: Protein K7 (126 aa).

The helical transmembrane segment at 24 to 44 threads the bilayer; sequence LPLHLWILCSLLAFLPLLVFI.

As to quaternary structure, interacts with host CAMLG; this interaction allows efficient apoptosis inhibition. Additionally, interacts with vGPCR/ORF74 and induces its proteasomeal degradation.

It is found in the host membrane. The protein localises to the host mitochondrion. Its function is as follows. Plays a role in the inhibition of host apoptosis to allow completion of the viral lytic replication and may thus favor the maintenance of persistent infection in infected host. This chain is Protein K7 (K7), found in Homo sapiens (Human).